We begin with the raw amino-acid sequence, 215 residues long: Ras-related protein Rab-14 (215 aa).

Ala-2 is subject to N-acetylalanine. Residues Gly-21, Val-22, Gly-23, Lys-24, Ser-25, Cys-26, Ala-38, Asp-39, Cys-40, His-42, and Thr-43 each coordinate GTP. Ser-25 lines the Mg(2+) pocket. The Switch 1 motif lies at 42-47 (HTIGVE). Mg(2+) is bound by residues Thr-43 and Asp-66. The short motif at 68–77 (AGQERFRAVT) is the Switch 2 element. GTP contacts are provided by Gly-69, Asn-124, Lys-125, Asp-127, Ala-155, and Lys-156. Residues 188–215 (SGVQHKPSAPQGGRLTSEPQPQREGCGC) form a disordered region. 2 S-geranylgeranyl cysteine lipidation sites follow: Cys-213 and Cys-215. Cys-215 is modified (cysteine methyl ester).

It belongs to the small GTPase superfamily. Rab family. As to quaternary structure, interacts with ZFYVE20. Interacts with KIF16B. Interacts (GTP-bound form) with RUFY1; the interaction recruits RUFY1 onto endosomal membranes. Interacts (GTP-bound form) with RAB11FIP1 (via its C-terminus); the interactions doesn't mediate RAB11FIP1 rectruitment to membranes. Interacts with RAB11FIP2. The cofactor is Mg(2+).

It is found in the recycling endosome. Its subcellular location is the early endosome membrane. It localises to the golgi apparatus membrane. The protein localises to the golgi apparatus. The protein resides in the trans-Golgi network membrane. It is found in the cytoplasmic vesicle. Its subcellular location is the phagosome. It catalyses the reaction GTP + H2O = GDP + phosphate + H(+). Its activity is regulated as follows. Regulated by guanine nucleotide exchange factors (GEFs) including DENND6A and DENND6B which promote the exchange of bound GDP for free GTP. Regulated by GTPase activating proteins (GAPs) which increase the GTP hydrolysis activity. Inhibited by GDP dissociation inhibitors (GDIs) which prevent Rab-GDP dissociation. In terms of biological role, the small GTPases Rab are key regulators of intracellular membrane trafficking, from the formation of transport vesicles to their fusion with membranes. Rabs cycle between an inactive GDP-bound form and an active GTP-bound form that is able to recruit to membranes different set of downstream effectors directly responsible for vesicle formation, movement, tethering and fusion. Involved in membrane trafficking between the Golgi complex and endosomes during early embryonic development. Regulates the Golgi to endosome transport of FGFR-containing vesicles during early development, a key process for developing basement membrane and epiblast and primitive endoderm lineages during early postimplantation development. May act by modulating the kinesin KIF16B-cargo association to endosomes. Regulates, together with its guanine nucleotide exchange factor DENND6A, the specific endocytic transport of ADAM10, N-cadherin/CDH2 shedding and cell-cell adhesion. Mediates endosomal tethering and fusion through the interaction with RUFY1 and RAB4B. Interaction with RAB11FIP1 may function in the process of neurite formation. The polypeptide is Ras-related protein Rab-14 (RAB14) (Sus scrofa (Pig)).